Consider the following 583-residue polypeptide: Cell division protein FtsZ (583 aa).

GTP-binding positions include 24 to 28, 111 to 113, Glu-142, Arg-146, and Asp-190; these read GGGGN and GTG. Disordered regions lie at residues 391 to 425 and 510 to 583; these read HQQPSQDFRPQSKLFASSPAEAPAALRPAQPVQQA and TNSL…RQSN. Low complexity predominate over residues 412–425; that stretch reads APAALRPAQPVQQA.

The protein belongs to the FtsZ family. Homodimer. Polymerizes to form a dynamic ring structure in a strictly GTP-dependent manner. Interacts directly with several other division proteins.

It is found in the cytoplasm. Essential cell division protein that forms a contractile ring structure (Z ring) at the future cell division site. The regulation of the ring assembly controls the timing and the location of cell division. One of the functions of the FtsZ ring is to recruit other cell division proteins to the septum to produce a new cell wall between the dividing cells. Binds GTP and shows GTPase activity. This chain is Cell division protein FtsZ, found in Rhizobium radiobacter (Agrobacterium tumefaciens).